The sequence spans 372 residues: Envelope phospholipase OPG057 (372 aa).

Residues 153–156 carry the YPPL motif; sequence YPPL. S-palmitoyl cysteine; by host attachment occurs at residues cysteine 185 and cysteine 186. Positions 307–334 constitute a PLD phosphodiesterase domain; the sequence is FTIQNNTKLLIVDDEYVHITSANFDGTH.

It belongs to the orthopoxvirus OPG057 family. Interacts with protein OPG190/B5. Post-translationally, palmitoylated. Attachment of the palmitate moiety is essential for correct intracellular targeting and protein function.

Its subcellular location is the virion membrane. The protein resides in the host Golgi apparatus. The protein localises to the host trans-Golgi network. It localises to the host endoplasmic reticulum membrane. The catalysed reaction is a 1,2-diacyl-sn-glycero-3-phosphocholine + H2O = a 1,2-diacyl-sn-glycero-3-phosphate + choline + H(+). In terms of biological role, major envelope protein that plays a role in the biogenesis of the viral double membrane and in egress of virus from the host cell. Produces the wrapped form of virus that is required for cell-to-cell spread. Acts as a lipase with broad specificity including phospholipase C, phospholipase A, and triacylglycerol lipase activities. This is Envelope phospholipase OPG057 (OPG057) from Vaccinia virus (strain Western Reserve) (VACV).